The following is a 715-amino-acid chain: Fatty acid oxidation complex subunit alpha (715 aa).

Residues 1–190 (MTTTSAFMLN…KAGLVDDVVP (190 aa)) are enoyl-CoA hydratase. The tract at residues 306–715 (GPLNSVGILG…WTNGETDQGN (410 aa)) is 3-hydroxyacyl-CoA dehydrogenase.

In the N-terminal section; belongs to the enoyl-CoA hydratase/isomerase family. This sequence in the central section; belongs to the 3-hydroxyacyl-CoA dehydrogenase family. As to quaternary structure, heterotetramer of two alpha chains (FadJ) and two beta chains (FadI).

The protein localises to the cytoplasm. It catalyses the reaction a (3S)-3-hydroxyacyl-CoA = a (2E)-enoyl-CoA + H2O. It carries out the reaction a 4-saturated-(3S)-3-hydroxyacyl-CoA = a (3E)-enoyl-CoA + H2O. The enzyme catalyses a (3S)-3-hydroxyacyl-CoA + NAD(+) = a 3-oxoacyl-CoA + NADH + H(+). The catalysed reaction is (3S)-3-hydroxybutanoyl-CoA = (3R)-3-hydroxybutanoyl-CoA. It participates in lipid metabolism; fatty acid beta-oxidation. Catalyzes the formation of a hydroxyacyl-CoA by addition of water on enoyl-CoA. Also exhibits 3-hydroxyacyl-CoA epimerase and 3-hydroxyacyl-CoA dehydrogenase activities. In Salmonella gallinarum (strain 287/91 / NCTC 13346), this protein is Fatty acid oxidation complex subunit alpha.